A 400-amino-acid chain; its full sequence is Acetylornithine aminotransferase (400 aa).

Pyridoxal 5'-phosphate contacts are provided by residues 102–103 and Phe-135; that span reads GA. Arg-138 serves as a coordination point for N(2)-acetyl-L-ornithine. 220–223 contacts pyridoxal 5'-phosphate; sequence DEVQ. Lys-249 carries the post-translational modification N6-(pyridoxal phosphate)lysine. Ser-276 lines the N(2)-acetyl-L-ornithine pocket. Residue Thr-277 coordinates pyridoxal 5'-phosphate.

Belongs to the class-III pyridoxal-phosphate-dependent aminotransferase family. ArgD subfamily. In terms of assembly, homodimer. Pyridoxal 5'-phosphate is required as a cofactor.

It localises to the cytoplasm. The enzyme catalyses N(2)-acetyl-L-ornithine + 2-oxoglutarate = N-acetyl-L-glutamate 5-semialdehyde + L-glutamate. The protein operates within amino-acid biosynthesis; L-arginine biosynthesis; N(2)-acetyl-L-ornithine from L-glutamate: step 4/4. The protein is Acetylornithine aminotransferase of Gloeobacter violaceus (strain ATCC 29082 / PCC 7421).